The following is an 84-amino-acid chain: Small ribosomal subunit protein bS20 (84 aa).

The interval methionine 1–methionine 28 is disordered.

This sequence belongs to the bacterial ribosomal protein bS20 family.

Binds directly to 16S ribosomal RNA. This is Small ribosomal subunit protein bS20 from Listeria monocytogenes serotype 4b (strain CLIP80459).